The following is a 274-amino-acid chain: Thiamine kinase (274 aa).

Belongs to the thiamine kinase family.

The enzyme catalyses thiamine + ATP = thiamine phosphate + ADP + H(+). Its pathway is cofactor biosynthesis; thiamine diphosphate biosynthesis; thiamine phosphate from thiamine: step 1/1. Its function is as follows. Catalyzes the ATP-dependent phosphorylation of thiamine to thiamine phosphate. Is involved in thiamine salvage. The polypeptide is Thiamine kinase (Escherichia coli O9:H4 (strain HS)).